The primary structure comprises 140 residues: MGISYGVKIAIEDEKIELVQADHVFGAAQVVVTNSNGESVGYTGDFKNPGKGTPILNTDVLIVDTTYGKPTFRRKFRDEVEVLFSDYVNDSLIYGPVRVYAYYGKIQEAMKILRKNGISAPFIVDGKIKEVTDIAIKYGL.

This is an uncharacterized protein from Acidianus ambivalens (Desulfurolobus ambivalens).